The sequence spans 435 residues: Asparagine--tRNA ligase (435 aa).

Belongs to the class-II aminoacyl-tRNA synthetase family. Homodimer.

It is found in the cytoplasm. The enzyme catalyses tRNA(Asn) + L-asparagine + ATP = L-asparaginyl-tRNA(Asn) + AMP + diphosphate + H(+). This Leptospira borgpetersenii serovar Hardjo-bovis (strain JB197) protein is Asparagine--tRNA ligase.